Reading from the N-terminus, the 154-residue chain is MQIYEGKLTAEGLRFGIVASRFNHALVDRLVEGAIDCIVRHGGREEDITLVRVPGSWEIPVAAGELARKEDIDAVIAIGVLIRGATPHFDYIASEVSKGLANLSLELRKPITFGVITADTLEQAIERAGTKHGNKGWEAALSAIEMANLFKSLR.

5-amino-6-(D-ribitylamino)uracil-binding positions include 22–23 (FN), 56–58 (SWE), and 80–82 (VLI). Residue 85-86 (AT) coordinates (2S)-2-hydroxy-3-oxobutyl phosphate. Catalysis depends on histidine 88, which acts as the Proton donor. Phenylalanine 113 provides a ligand contact to 5-amino-6-(D-ribitylamino)uracil. Arginine 127 is a (2S)-2-hydroxy-3-oxobutyl phosphate binding site. Lysine 135 is a binding site for 5-amino-6-(D-ribitylamino)uracil.

Belongs to the DMRL synthase family. As to quaternary structure, forms an icosahedral capsid composed of 60 subunits, arranged as a dodecamer of pentamers.

It catalyses the reaction (2S)-2-hydroxy-3-oxobutyl phosphate + 5-amino-6-(D-ribitylamino)uracil = 6,7-dimethyl-8-(1-D-ribityl)lumazine + phosphate + 2 H2O + H(+). The protein operates within cofactor biosynthesis; riboflavin biosynthesis; riboflavin from 2-hydroxy-3-oxobutyl phosphate and 5-amino-6-(D-ribitylamino)uracil: step 1/2. Its function is as follows. Catalyzes the formation of 6,7-dimethyl-8-ribityllumazine by condensation of 5-amino-6-(D-ribitylamino)uracil with 3,4-dihydroxy-2-butanone 4-phosphate. This is the penultimate step in the biosynthesis of riboflavin. The sequence is that of 6,7-dimethyl-8-ribityllumazine synthase (ribH) from Aquifex aeolicus (strain VF5).